The following is a 107-amino-acid chain: Thioredoxin (107 aa).

The region spanning Pro-2–Leu-107 is the Thioredoxin domain. Active-site nucleophile residues include Cys-32 and Cys-35. Residues Cys-32 and Cys-35 are joined by a disulfide bond.

This sequence belongs to the thioredoxin family.

It is found in the plastid. Its subcellular location is the chloroplast. Functionally, participates in various redox reactions through the reversible oxidation of its active center dithiol to a disulfide and catalyzes dithiol-disulfide exchange reactions. The chain is Thioredoxin (trxA) from Cyanidium caldarium (Red alga).